Here is a 431-residue protein sequence, read N- to C-terminus: Na(+)-translocating NADH-quinone reductase subunit F (431 aa).

Residues 10–30 (ISIASLVFCVIGLILSGVILI) traverse the membrane as a helical segment. The 2Fe-2S ferredoxin-type domain maps to 41–133 (CKLKINNDDS…DMNLEIEERY (93 aa)). Cysteine 76, cysteine 82, cysteine 85, and cysteine 117 together coordinate [2Fe-2S] cluster. In terms of domain architecture, FAD-binding FR-type spans 136 to 286 (ASSWEGTVVS…SGPYGESFMK (151 aa)).

This sequence belongs to the NqrF family. As to quaternary structure, composed of six subunits; NqrA, NqrB, NqrC, NqrD, NqrE and NqrF. The cofactor is [2Fe-2S] cluster. FAD is required as a cofactor.

The protein localises to the cell inner membrane. It catalyses the reaction a ubiquinone + n Na(+)(in) + NADH + H(+) = a ubiquinol + n Na(+)(out) + NAD(+). NQR complex catalyzes the reduction of ubiquinone-1 to ubiquinol by two successive reactions, coupled with the transport of Na(+) ions from the cytoplasm to the periplasm. The first step is catalyzed by NqrF, which accepts electrons from NADH and reduces ubiquinone-1 to ubisemiquinone by a one-electron transfer pathway. The polypeptide is Na(+)-translocating NADH-quinone reductase subunit F (Chlamydia felis (strain Fe/C-56) (Chlamydophila felis)).